Here is a 578-residue protein sequence, read N- to C-terminus: Sulfite reductase [NADPH] hemoprotein beta-component (578 aa).

Positions 441, 447, 487, and 491 each coordinate [4Fe-4S] cluster. Cys-491 contacts siroheme.

This sequence belongs to the nitrite and sulfite reductase 4Fe-4S domain family. Alpha(8)-beta(8). The alpha component is a flavoprotein, the beta component is a hemoprotein. Siroheme serves as cofactor. [4Fe-4S] cluster is required as a cofactor.

It catalyses the reaction hydrogen sulfide + 3 NADP(+) + 3 H2O = sulfite + 3 NADPH + 4 H(+). The protein operates within sulfur metabolism; hydrogen sulfide biosynthesis; hydrogen sulfide from sulfite (NADPH route): step 1/1. Component of the sulfite reductase complex that catalyzes the 6-electron reduction of sulfite to sulfide. This is one of several activities required for the biosynthesis of L-cysteine from sulfate. The polypeptide is Sulfite reductase [NADPH] hemoprotein beta-component (Vibrio vulnificus (strain YJ016)).